Reading from the N-terminus, the 388-residue chain is Chorismate synthase (388 aa).

Residues Arg-39 and Arg-45 each contribute to the NADP(+) site. FMN is bound by residues 130–132, 251–252, Gly-296, 311–315, and Arg-337; these read RSS, NA, and KPIPT.

The protein belongs to the chorismate synthase family. Homotetramer. FMNH2 is required as a cofactor.

The enzyme catalyses 5-O-(1-carboxyvinyl)-3-phosphoshikimate = chorismate + phosphate. The protein operates within metabolic intermediate biosynthesis; chorismate biosynthesis; chorismate from D-erythrose 4-phosphate and phosphoenolpyruvate: step 7/7. Catalyzes the anti-1,4-elimination of the C-3 phosphate and the C-6 proR hydrogen from 5-enolpyruvylshikimate-3-phosphate (EPSP) to yield chorismate, which is the branch point compound that serves as the starting substrate for the three terminal pathways of aromatic amino acid biosynthesis. This reaction introduces a second double bond into the aromatic ring system. This is Chorismate synthase from Streptococcus pneumoniae (strain ATCC 700669 / Spain 23F-1).